A 305-amino-acid chain; its full sequence is Probable 5-dehydro-4-deoxyglucarate dehydratase (305 aa).

It belongs to the DapA family.

The enzyme catalyses 5-dehydro-4-deoxy-D-glucarate + H(+) = 2,5-dioxopentanoate + CO2 + H2O. Its pathway is carbohydrate acid metabolism; D-glucarate degradation; 2,5-dioxopentanoate from D-glucarate: step 2/2. This chain is Probable 5-dehydro-4-deoxyglucarate dehydratase, found in Pseudomonas entomophila (strain L48).